A 122-amino-acid polypeptide reads, in one-letter code: MIQQQTRLKVADNSGAKEIMCIRVLGGSHRKWGNIGDVIVASVKSATPGGVVKKGEVVKAVIVRSVKGLRRADGSYIKFDENAAVIIKDDKNPKGTRIFGPVARELRDKEFNKILSLAPEVL.

The protein belongs to the universal ribosomal protein uL14 family. In terms of assembly, part of the 50S ribosomal subunit. Forms a cluster with proteins L3 and L19. In the 70S ribosome, L14 and L19 interact and together make contacts with the 16S rRNA in bridges B5 and B8.

Binds to 23S rRNA. Forms part of two intersubunit bridges in the 70S ribosome. The sequence is that of Large ribosomal subunit protein uL14 from Clostridium botulinum (strain 657 / Type Ba4).